Consider the following 147-residue polypeptide: Large ribosomal subunit protein uL16 (147 aa).

The span at 1–16 (MLMPKRVKRRRVHRGR) shows a compositional bias: basic residues. The segment at 1 to 20 (MLMPKRVKRRRVHRGRMTGQ) is disordered.

Belongs to the universal ribosomal protein uL16 family. In terms of assembly, part of the 50S ribosomal subunit.

In terms of biological role, binds 23S rRNA and is also seen to make contacts with the A and possibly P site tRNAs. The chain is Large ribosomal subunit protein uL16 from Alkaliphilus metalliredigens (strain QYMF).